The following is a 183-amino-acid chain: Small ribosomal subunit protein eS10z (183 aa).

The tract at residues 91 to 183 (LKKSARPPGR…GAGPTSSSME (93 aa)) is disordered. Basic and acidic residues predominate over residues 109–130 (DRPRGPPRFEGDRPRFGDRDGY). 2 stretches are compositionally biased toward gly residues: residues 131–146 (RGGPRGAPGDFGGEKG) and 161–175 (GRPGFGRGGGGGFGA).

This sequence belongs to the eukaryotic ribosomal protein eS10 family.

The protein localises to the cytoplasm. This is Small ribosomal subunit protein eS10z from Oryza sativa subsp. japonica (Rice).